The chain runs to 1841 residues: Cell division control protein 12 (1841 aa).

Polar residues-rich tracts occupy residues 1 to 25 and 46 to 63; these read MRNS…TPSA and SIES…QSVT. Disordered regions lie at residues 1-63, 78-134, and 152-181; these read MRNS…QSVT, NSHN…GPRL, and PPVH…RTKH. One can recognise a GBD/FH3 domain in the interval 232 to 620; sequence TRPPSLDQLI…RILLNSKVSN (389 aa). Residues 674 to 715 are a coiled coil; it reads LGAEDLIAKLNKEVEDQKDVILSQKRTNETLKTEIDALQKSH. Positions 740 to 972 constitute an FH1 domain; that stretch reads GSTNSKERII…VSPAVSNNIS (233 aa). The region spanning 980–1391 is the FH2 domain; it reads TGLTRRPTRR…QHRRLNLVNN (412 aa). Residues 1260-1290 adopt a coiled-coil conformation; that stretch reads TEAAKLNIEAIEQECSELIRGCQNLQIDCDS. Disordered regions lie at residues 1445-1661, 1696-1715, and 1735-1758; these read EAPN…ENNL, TTTT…INTI, and KSNK…GSNK. Composition is skewed to polar residues over residues 1447 to 1456 and 1483 to 1497; these read PNTSTKSSPA and SEST…NITP. A compositionally biased stretch (basic and acidic residues) spans 1499–1516; that stretch reads KKGEVSSKAKKGYNYEKR. Residues 1539-1553 show a composition bias toward polar residues; sequence GRSASYTFSDPSSLE. Residue S1541 is modified to Phosphoserine. A Phosphotyrosine modification is found at Y1544. Over residues 1554 to 1567 the composition is skewed to basic and acidic residues; sequence DSNRQKPFNGEKFR. Positions 1568 to 1577 are enriched in basic residues; it reads RFSSKSRRGS. Residues 1594-1604 show a composition bias toward polar residues; that stretch reads INNNQTSPQNK. Residues 1605 to 1621 are compositionally biased toward basic and acidic residues; it reads PSKESLKSDTISNEKKV. The span at 1630–1641 shows a compositional bias: polar residues; sequence NLLTPTISNGTR.

The protein belongs to the formin homology family. BNI1 subfamily. In terms of assembly, interacts with profilin and actin at the FH1 and FH2 domains respectively.

The protein localises to the nucleus. In terms of biological role, plays a role in the cell cycle. Involved in cytokinesis. Component of the cell division ring. In the absence of profilin, caps the barbed end of actin filaments, thus preventing subunit addition and dissociation. In the presence of profilin, nucleates actin filaments that grow rapidly from their barbed ends. The chain is Cell division control protein 12 (cdc12) from Schizosaccharomyces pombe (strain 972 / ATCC 24843) (Fission yeast).